An 835-amino-acid chain; its full sequence is Leucine--tRNA ligase (835 aa).

The 'HIGH' region signature appears at Pro-36 to His-46. Residues Lys-602 to Ser-606 carry the 'KMSKS' region motif. Residue Lys-605 coordinates ATP.

This sequence belongs to the class-I aminoacyl-tRNA synthetase family.

The protein resides in the cytoplasm. The catalysed reaction is tRNA(Leu) + L-leucine + ATP = L-leucyl-tRNA(Leu) + AMP + diphosphate. This Rickettsia massiliae (strain Mtu5) protein is Leucine--tRNA ligase.